The following is a 180-amino-acid chain: Putative 5'(3')-deoxyribonucleotidase (180 aa).

Asp-9 (nucleophile) is an active-site residue. Positions 9, 11, and 135 each coordinate Mg(2+). The Proton donor role is filled by Asp-11.

The protein belongs to the 5'(3')-deoxyribonucleotidase family. Mg(2+) serves as cofactor.

In terms of biological role, dephosphorylates the 5' and 2'(3')-phosphates of deoxyribonucleotides. The sequence is that of Putative 5'(3')-deoxyribonucleotidase from Staphylococcus aureus (strain Mu50 / ATCC 700699).